Reading from the N-terminus, the 94-residue chain is MEWKGRVLVQLLMLVCVLEVSLCQHWSYGWLPGGKRSVGEVEATIRMMDGGDTLLSIPADTPMEQLSPIHIMNEVDAEGFPLKEQRFPNRRGRM.

Residues 1-23 form the signal peptide; it reads MEWKGRVLVQLLMLVCVLEVSLC. Gln24 carries the pyrrolidone carboxylic acid modification. Glycine amide is present on Gly33.

The protein belongs to the GnRH family.

It localises to the secreted. Functionally, stimulates the secretion of gonadotropins. The protein is Progonadoliberin-3 (gnrh3) of Rutilus rutilus (Roach).